The primary structure comprises 603 residues: Elongation factor 4 (603 aa).

The 183-residue stretch at 7–189 (SHIRNFSIIA…SIVHLVPPPR (183 aa)) folds into the tr-type G domain. GTP-binding positions include 19 to 24 (DHGKST) and 136 to 139 (NKID).

Belongs to the TRAFAC class translation factor GTPase superfamily. Classic translation factor GTPase family. LepA subfamily.

The protein localises to the cell inner membrane. The catalysed reaction is GTP + H2O = GDP + phosphate + H(+). Functionally, required for accurate and efficient protein synthesis under certain stress conditions. May act as a fidelity factor of the translation reaction, by catalyzing a one-codon backward translocation of tRNAs on improperly translocated ribosomes. Back-translocation proceeds from a post-translocation (POST) complex to a pre-translocation (PRE) complex, thus giving elongation factor G a second chance to translocate the tRNAs correctly. Binds to ribosomes in a GTP-dependent manner. The sequence is that of Elongation factor 4 from Thermosynechococcus vestitus (strain NIES-2133 / IAM M-273 / BP-1).